Here is a 933-residue protein sequence, read N- to C-terminus: Valine--tRNA ligase (933 aa).

The interval 1–24 (MIERVKTTKLSEASGLPKTYDPVG) is disordered. The 'HIGH' region motif lies at 57 to 67 (PNVTGSLHMGH). The 'KMSKS' region signature appears at 557-561 (KMSKS). Lys-560 contacts ATP. Residues 866–932 (LIDIASLRSR…RLVKERLMGL (67 aa)) are a coiled coil.

The protein belongs to the class-I aminoacyl-tRNA synthetase family. ValS type 1 subfamily. In terms of assembly, monomer.

It is found in the cytoplasm. It carries out the reaction tRNA(Val) + L-valine + ATP = L-valyl-tRNA(Val) + AMP + diphosphate. Its function is as follows. Catalyzes the attachment of valine to tRNA(Val). As ValRS can inadvertently accommodate and process structurally similar amino acids such as threonine, to avoid such errors, it has a 'posttransfer' editing activity that hydrolyzes mischarged Thr-tRNA(Val) in a tRNA-dependent manner. The polypeptide is Valine--tRNA ligase (Prochlorococcus marinus (strain NATL2A)).